The following is a 221-amino-acid chain: Orotidine 5'-phosphate decarboxylase (221 aa).

Residues D12, K34, 60-69 (DFKVADIPNT), S117, 170-180 (PGVGAQGGKAS), G193, and R194 each bind substrate. Catalysis depends on K62, which acts as the Proton donor.

It belongs to the OMP decarboxylase family. Type 1 subfamily. As to quaternary structure, homodimer.

It catalyses the reaction orotidine 5'-phosphate + H(+) = UMP + CO2. Its pathway is pyrimidine metabolism; UMP biosynthesis via de novo pathway; UMP from orotate: step 2/2. In terms of biological role, catalyzes the decarboxylation of orotidine 5'-monophosphate (OMP) to uridine 5'-monophosphate (UMP). This chain is Orotidine 5'-phosphate decarboxylase, found in Methanosarcina acetivorans (strain ATCC 35395 / DSM 2834 / JCM 12185 / C2A).